Consider the following 236-residue polypeptide: MILLVSPKDVAEAYEAIEGGADIIDVKNPPEGSLGANFPWVIKETREATPEGMLVSAAIGDVPYKPGTVTLAALGATVSGADYIKVGLYGTRSYQEALDVMKNVTKAVKAVGENKIVVAAGYADAYRVGGVDPLVIPRVARDAGCDVAMLDTAVKDGKTLFDHMSIELLKEFVEETHKYGMKCALAGSIKIEEIPMLKEINCDIVGVRGAACTKGDRNEGRIQKDLVKEIVKVCKE.

K27 (schiff-base intermediate with substrate) is an active-site residue. Residue K85 is the Proton acceptor of the active site.

This sequence belongs to the MfnB family.

The catalysed reaction is 2 D-glyceraldehyde 3-phosphate = 4-(hydroxymethyl)-2-furancarboxaldehyde phosphate + phosphate + 2 H2O. It functions in the pathway cofactor biosynthesis; methanofuran biosynthesis. Catalyzes the formation of 4-(hydroxymethyl)-2-furancarboxaldehyde phosphate (4-HFC-P) from two molecules of glyceraldehyde-3-P (GA-3-P). This chain is (5-formylfuran-3-yl)methyl phosphate synthase, found in Methanococcus maripaludis (strain C6 / ATCC BAA-1332).